Here is a 129-residue protein sequence, read N- to C-terminus: Gem-associated protein 7 (129 aa).

The residue at position 1 (Met-1) is an N-acetylmethionine. Residues Met-1–Gly-31 enclose the SUZ-C domain. In terms of domain architecture, Sm spans Arg-63–Leu-129.

It belongs to the gemin-7 family. In terms of assembly, part of the core SMN complex that contains SMN1, GEMIN2/SIP1, DDX20/GEMIN3, GEMIN4, GEMIN5, GEMIN6, GEMIN7, GEMIN8 and STRAP/UNRIP. Part of the SMN-Sm complex that contains SMN1, GEMIN2/SIP1, DDX20/GEMIN3, GEMIN4, GEMIN5, GEMIN6, GEMIN7, GEMIN8, STRAP/UNRIP and the Sm proteins SNRPB, SNRPD1, SNRPD2, SNRPD3, SNRPE, SNRPF and SNRPG. Interacts with GEMIN6; the interaction is direct. Interacts with STRAP/UNRIP; the interaction is direct. Interacts with GEMIN8; the interaction is direct. Interacts with SNRPB, SNRPD2, SNRPD3 and SNRPE; the interaction is direct.

Its subcellular location is the nucleus. It localises to the nucleoplasm. The protein localises to the gem. It is found in the cytoplasm. In terms of biological role, the SMN complex catalyzes the assembly of small nuclear ribonucleoproteins (snRNPs), the building blocks of the spliceosome, and thereby plays an important role in the splicing of cellular pre-mRNAs. Most spliceosomal snRNPs contain a common set of Sm proteins SNRPB, SNRPD1, SNRPD2, SNRPD3, SNRPE, SNRPF and SNRPG that assemble in a heptameric protein ring on the Sm site of the small nuclear RNA to form the core snRNP (Sm core). In the cytosol, the Sm proteins SNRPD1, SNRPD2, SNRPE, SNRPF and SNRPG are trapped in an inactive 6S pICln-Sm complex by the chaperone CLNS1A that controls the assembly of the core snRNP. To assemble core snRNPs, the SMN complex accepts the trapped 5Sm proteins from CLNS1A forming an intermediate. Binding of snRNA inside 5Sm triggers eviction of the SMN complex, thereby allowing binding of SNRPD3 and SNRPB to complete assembly of the core snRNP. The sequence is that of Gem-associated protein 7 (Gemin7) from Mus musculus (Mouse).